We begin with the raw amino-acid sequence, 252 residues long: tRNA (guanine-N(1)-)-methyltransferase (252 aa).

Residues Gly117 and Ile137–Leu142 each bind S-adenosyl-L-methionine.

It belongs to the RNA methyltransferase TrmD family. Homodimer.

Its subcellular location is the cytoplasm. It catalyses the reaction guanosine(37) in tRNA + S-adenosyl-L-methionine = N(1)-methylguanosine(37) in tRNA + S-adenosyl-L-homocysteine + H(+). Its function is as follows. Specifically methylates guanosine-37 in various tRNAs. The polypeptide is tRNA (guanine-N(1)-)-methyltransferase (Idiomarina loihiensis (strain ATCC BAA-735 / DSM 15497 / L2-TR)).